A 428-amino-acid chain; its full sequence is Adenylosuccinate synthetase (428 aa).

GTP is bound by residues 12–18 and 40–42; these read GDEGKGK and GHT. Residue D13 is the Proton acceptor of the active site. The Mg(2+) site is built by D13 and G40. Residues 13 to 16, 38 to 41, T128, R142, Q222, T237, and R301 contribute to the IMP site; these read DEGK and NAGH. H41 serves as the catalytic Proton donor. Residue 297–303 participates in substrate binding; that stretch reads VNTGRAR. GTP-binding positions include R303, 329–331, and 411–413; these read KLD and STS.

This sequence belongs to the adenylosuccinate synthetase family. In terms of assembly, homodimer. Mg(2+) serves as cofactor.

It localises to the cytoplasm. The enzyme catalyses IMP + L-aspartate + GTP = N(6)-(1,2-dicarboxyethyl)-AMP + GDP + phosphate + 2 H(+). It participates in purine metabolism; AMP biosynthesis via de novo pathway; AMP from IMP: step 1/2. Its function is as follows. Plays an important role in the de novo pathway of purine nucleotide biosynthesis. Catalyzes the first committed step in the biosynthesis of AMP from IMP. This is Adenylosuccinate synthetase from Caulobacter vibrioides (strain ATCC 19089 / CIP 103742 / CB 15) (Caulobacter crescentus).